Here is a 236-residue protein sequence, read N- to C-terminus: MQQLIKEHFGNGGKVRSTSIEYPIFVHSGSISAMLLTLVNALECNDVDEGVLVYPTGSTNPMENILRMENPFDGFLAKEAYSIHFQSVLERIQLIPCSHVDDLEKIVEVRLKHAKLILGIADISKLLKIRGCLNGRYLSRYLMLCLQNSKILIVCETGGLQERIPIIEDISINEDTQRTVSLETIYATWIPTFWESKRKSHEKDEGRLVDRRHKVLVDWLANTCFRGMSLKDHSAL.

This is an uncharacterized protein from Schizosaccharomyces pombe (strain 972 / ATCC 24843) (Fission yeast).